The primary structure comprises 512 residues: MSSVNSIPTATSTVYISVLPATATPSGGSGGNVLHEDLNKFYDYGNTSWILACTPLCLIMVPGVAFFYSGLARRKNTLALIMLSMLGLCVSFFQWYFWGYSLAFSQTGTSGYIGNLRHFAFIRTLADYSPGSNNIPELVFANFQGMFAAITVALFTGAAAERGRIGPMLIITFVWLTVVYCPIACWIWNPNGWAFKFGVYDFAGGGPVEVGSGFAALAYTVCLGRRSKFVEEQFRPHSVLNVVLGTSLLWFGWLGFNGGSAYGSNLRAAMAITNTNLAGAVAGLVWVIYDYIFRTRKWSTIGFCSGVVAGLVAATPCAGFVSPHASLAIGAITGLCCNWAIKLKSHMRIDDAMDIFAIHGVAGFVGTFLNGLFAVDYIAAMDGIYVGENKIRGGWFDHHWRQLGLQMAYICAVGAYDFVVTFIILFITDKIPYLQLRVSPDAEEIGVDADQIGEYAFDYIEERREYKHWKISPAGVPEEIIISNGVAQPTGNVAAPGKILESTNPLELGLTI.

Over 1-47 the chain is Extracellular; that stretch reads MSSVNSIPTATSTVYISVLPATATPSGGSGGNVLHEDLNKFYDYGNT. Residues 48 to 68 traverse the membrane as a helical segment; it reads SWILACTPLCLIMVPGVAFFY. At 69 to 77 the chain is on the cytoplasmic side; sequence SGLARRKNT. The chain crosses the membrane as a helical span at residues 78 to 98; sequence LALIMLSMLGLCVSFFQWYFW. Residues 99-137 lie on the Extracellular side of the membrane; sequence GYSLAFSQTGTSGYIGNLRHFAFIRTLADYSPGSNNIPE. A helical membrane pass occupies residues 138–158; the sequence is LVFANFQGMFAAITVALFTGA. Residues 159-167 are Cytoplasmic-facing; that stretch reads AAERGRIGP. A helical membrane pass occupies residues 168 to 188; it reads MLIITFVWLTVVYCPIACWIW. Topologically, residues 189 to 201 are extracellular; sequence NPNGWAFKFGVYD. A helical membrane pass occupies residues 202–222; the sequence is FAGGGPVEVGSGFAALAYTVC. The Cytoplasmic portion of the chain corresponds to 223-238; that stretch reads LGRRSKFVEEQFRPHS. A helical membrane pass occupies residues 239 to 259; that stretch reads VLNVVLGTSLLWFGWLGFNGG. Residues 260-267 are Extracellular-facing; that stretch reads SAYGSNLR. The helical transmembrane segment at 268–288 threads the bilayer; that stretch reads AAMAITNTNLAGAVAGLVWVI. Over 289 to 300 the chain is Cytoplasmic; the sequence is YDYIFRTRKWST. A helical membrane pass occupies residues 301 to 321; it reads IGFCSGVVAGLVAATPCAGFV. Residue S322 is a topological domain, extracellular. The helical transmembrane segment at 323–343 threads the bilayer; sequence PHASLAIGAITGLCCNWAIKL. Over 344 to 354 the chain is Cytoplasmic; the sequence is KSHMRIDDAMD. Residues 355–375 form a helical membrane-spanning segment; sequence IFAIHGVAGFVGTFLNGLFAV. Residues 376 to 406 are Extracellular-facing; it reads DYIAAMDGIYVGENKIRGGWFDHHWRQLGLQ. Residues 407–427 form a helical membrane-spanning segment; sequence MAYICAVGAYDFVVTFIILFI. Residues 428–512 are Cytoplasmic-facing; the sequence is TDKIPYLQLR…TNPLELGLTI (85 aa).

It belongs to the ammonia transporter channel (TC 1.A.11.2) family.

The protein localises to the membrane. Transporter for ammonium to use as a nitrogen source. In Schizosaccharomyces pombe (strain 972 / ATCC 24843) (Fission yeast), this protein is Ammonium transporter 2 (amt2).